A 193-amino-acid polypeptide reads, in one-letter code: Putative manganese efflux pump MntP (193 aa).

Transmembrane regions (helical) follow at residues 3–23 (PLSI…AAIG), 37–57 (VRAG…GWML), 66–86 (AAFD…HMIV), 109–131 (LALA…SLAF), 146–166 (CTLS…ALIG), and 171–191 (ILGG…HLSG).

The protein belongs to the MntP (TC 9.B.29) family.

The protein localises to the cell inner membrane. Functionally, probably functions as a manganese efflux pump. The protein is Putative manganese efflux pump MntP of Xanthomonas campestris pv. campestris (strain 8004).